The sequence spans 1025 residues: Multidrug resistance protein MdtC (1025 aa).

Transmembrane regions (helical) follow at residues 3-23 (FFAL…AITL), 333-353 (EVEQ…FLFL), 360-380 (IIPA…MYLC), 387-407 (LSLM…IVVL), 431-451 (VGFT…PLLL), 463-483 (FAVT…TLTP), 528-548 (LVGV…ISIP), 853-873 (VILI…LYES), 875-895 (VHPL…LLAL), 897-917 (LFNA…IGIV), 953-973 (PIMM…LSGG), and 984-1004 (ITIV…TPVV).

It belongs to the resistance-nodulation-cell division (RND) (TC 2.A.6) family. MdtC subfamily. As to quaternary structure, part of a tripartite efflux system composed of MdtA, MdtB and MdtC. MdtC forms a heteromultimer with MdtB.

It is found in the cell inner membrane. Its function is as follows. The MdtABC tripartite complex confers resistance against novobiocin and deoxycholate. The protein is Multidrug resistance protein MdtC of Escherichia coli (strain UTI89 / UPEC).